The primary structure comprises 271 residues: Acetyl-coenzyme A carboxylase carboxyl transferase subunit beta (271 aa).

Residues 21–271 (LWIQCPYCKQ…LGDLLALHTA (251 aa)) enclose the CoA carboxyltransferase N-terminal domain. Positions 25, 28, 43, and 46 each coordinate Zn(2+). The segment at 25–46 (CPYCKQGSYRESLGNAQVCPHC) adopts a C4-type zinc-finger fold.

It belongs to the AccD/PCCB family. In terms of assembly, acetyl-CoA carboxylase is a heterohexamer composed of biotin carboxyl carrier protein (AccB), biotin carboxylase (AccC) and two subunits each of ACCase subunit alpha (AccA) and ACCase subunit beta (AccD). Requires Zn(2+) as cofactor.

The protein resides in the cytoplasm. It carries out the reaction N(6)-carboxybiotinyl-L-lysyl-[protein] + acetyl-CoA = N(6)-biotinyl-L-lysyl-[protein] + malonyl-CoA. It participates in lipid metabolism; malonyl-CoA biosynthesis; malonyl-CoA from acetyl-CoA: step 1/1. In terms of biological role, component of the acetyl coenzyme A carboxylase (ACC) complex. Biotin carboxylase (BC) catalyzes the carboxylation of biotin on its carrier protein (BCCP) and then the CO(2) group is transferred by the transcarboxylase to acetyl-CoA to form malonyl-CoA. The sequence is that of Acetyl-coenzyme A carboxylase carboxyl transferase subunit beta from Lacticaseibacillus casei (strain BL23) (Lactobacillus casei).